A 444-amino-acid chain; its full sequence is Glutamate-1-semialdehyde 2,1-aminomutase (444 aa).

K267 bears the N6-(pyridoxal phosphate)lysine mark.

The protein belongs to the class-III pyridoxal-phosphate-dependent aminotransferase family. HemL subfamily. In terms of assembly, homodimer. Requires pyridoxal 5'-phosphate as cofactor.

The protein resides in the cytoplasm. It catalyses the reaction (S)-4-amino-5-oxopentanoate = 5-aminolevulinate. It participates in porphyrin-containing compound metabolism; protoporphyrin-IX biosynthesis; 5-aminolevulinate from L-glutamyl-tRNA(Glu): step 2/2. This Xylella fastidiosa (strain M12) protein is Glutamate-1-semialdehyde 2,1-aminomutase.